The following is a 413-amino-acid chain: Tyrosine--tRNA ligase 2 (413 aa).

The 'HIGH' region signature appears at 58 to 67 (PSAPDVHLGH). 2 repeat units span residues 89-94 (GDFTGK) and 96-101 (GDPTGK). Positions 89-101 (GDFTGKIGDPTGK) are 2 X 6 AA tandem repeats. The short motif at 242–246 (KMSKS) is the 'KMSKS' region element. An ATP-binding site is contributed by K245. In terms of domain architecture, S4 RNA-binding spans 353–413 (IAMIDLLVKL…VGKRKFLKLQ (61 aa)).

Belongs to the class-I aminoacyl-tRNA synthetase family. TyrS type 2 subfamily. Homodimer.

It is found in the cytoplasm. The catalysed reaction is tRNA(Tyr) + L-tyrosine + ATP = L-tyrosyl-tRNA(Tyr) + AMP + diphosphate + H(+). In terms of biological role, catalyzes the attachment of tyrosine to tRNA(Tyr) in a two-step reaction: tyrosine is first activated by ATP to form Tyr-AMP and then transferred to the acceptor end of tRNA(Tyr). The polypeptide is Tyrosine--tRNA ligase 2 (Bacillus subtilis (strain 168)).